Reading from the N-terminus, the 709-residue chain is ATP-binding cassette sub-family F member 3 (709 aa).

Alanine 2 carries the post-translational modification N-acetylalanine. Phosphoserine is present on serine 83. A compositionally biased stretch (basic and acidic residues) spans 129 to 143 (RLKAKQEKRSEKETL). Residues 129-171 (RLKAKQEKRSEKETLKTSNPLVLEEASASQAGSRKESRLESSG) form a disordered region. A phosphoserine mark is found at serine 155, serine 157, and serine 161. Over residues 161-171 (SRKESRLESSG) the composition is skewed to basic and acidic residues. ABC transporter domains follow at residues 178–424 (VRIE…LNQQ) and 492–707 (LQLD…RREG). Residue 210–217 (GRNGLGKT) coordinates ATP. A Phosphoserine modification is found at serine 283. ATP is bound at residue 525 to 532 (GENGAGKS).

It belongs to the ABC transporter superfamily. ABCF family. EF3 subfamily.

Its function is as follows. Displays an antiviral effect against flaviviruses such as west Nile virus (WNV) in the presence of OAS1B. The polypeptide is ATP-binding cassette sub-family F member 3 (Abcf3) (Mus musculus (Mouse)).